The primary structure comprises 737 residues: Catalase-peroxidase (737 aa).

The first 23 residues, 1-23 (MLKKILPVLITLAIVHNTPTAWA), serve as a signal peptide directing secretion. Residues 102-223 (WHGAGTYRIY…LAATQMGLIY (122 aa)) constitute a cross-link (tryptophyl-tyrosyl-methioninium (Trp-Tyr) (with M-249)). The active-site Proton acceptor is His-103. A cross-link (tryptophyl-tyrosyl-methioninium (Tyr-Met) (with W-102)) is located at residues 223–249 (YVNPEGPNGKPDPVAAAKDIREAFARM). His-264 serves as a coordination point for heme b.

Belongs to the peroxidase family. Peroxidase/catalase subfamily. Homodimer or homotetramer. It depends on heme b as a cofactor. Formation of the three residue Trp-Tyr-Met cross-link is important for the catalase, but not the peroxidase activity of the enzyme.

It catalyses the reaction H2O2 + AH2 = A + 2 H2O. The enzyme catalyses 2 H2O2 = O2 + 2 H2O. Its function is as follows. Bifunctional enzyme with both catalase and broad-spectrum peroxidase activity. In Yersinia pseudotuberculosis serotype I (strain IP32953), this protein is Catalase-peroxidase.